Here is a 65-residue protein sequence, read N- to C-terminus: Toxin KTx8 (65 aa).

The first 25 residues, 1–25 (MNKVCFVVVLVLFVALAAYVSPIEG), serve as a signal peptide directing secretion. Disulfide bonds link C31/C53, C38/C61, and C42/C63.

The protein belongs to the short scorpion toxin superfamily. Potassium channel inhibitor family. Alpha-KTx 11 subfamily. In terms of tissue distribution, expressed by the venom gland.

It is found in the secreted. Functionally, this recombinant toxin inhibits the mammalian voltage-gated potassium channels Kv1.3/KCNA3 in vitro with an IC(50) of 26.40 nM. This Lychas mucronatus (Chinese swimming scorpion) protein is Toxin KTx8.